Here is a 555-residue protein sequence, read N- to C-terminus: Hdr-like menaquinol oxidoreductase iron-sulfur subunit 2 (555 aa).

4Fe-4S ferredoxin-type domains lie at 82–111 and 151–180; these read RSFK…GDPK and KELY…AEIV. Positions 91, 94, 97, 101, 160, 163, 166, and 170 each coordinate [4Fe-4S] cluster.

Consists of five subunits: an integral membrane subunit, a cytochrome b-like subunit, a cytochrome c subunit and two iron-sulfur subunits. It depends on [4Fe-4S] cluster as a cofactor.

The protein localises to the cell membrane. Its function is as follows. Has menaquinol-oxidizing activity. HmeC and HmeD subunits may together mediate electron transfer from menaquinol to an unidentified electron acceptor on the cytoplasmic side of the membrane. The polypeptide is Hdr-like menaquinol oxidoreductase iron-sulfur subunit 2 (hmeD) (Archaeoglobus fulgidus (strain ATCC 49558 / DSM 4304 / JCM 9628 / NBRC 100126 / VC-16)).